We begin with the raw amino-acid sequence, 115 residues long: U3-lycotoxin-Ls1a (115 aa).

Residues 1–20 form the signal peptide; it reads MKFVLLFGVLLVTFFSYSSA. A propeptide spanning residues 21 to 44 is cleaved from the precursor; the sequence is EMLDDFDQADEDELLSLIEKGEAR. 4 disulfide bridges follow: Cys-48/Cys-63, Cys-55/Cys-72, Cys-62/Cys-87, and Cys-74/Cys-85.

The protein belongs to the neurotoxin 19 (CSTX) family. 01 subfamily. In terms of tissue distribution, expressed by the venom gland.

It localises to the secreted. The polypeptide is U3-lycotoxin-Ls1a (Lycosa singoriensis (Wolf spider)).